Reading from the N-terminus, the 152-residue chain is UPF0266 membrane protein YobD (152 aa).

3 helical membrane passes run 6–26, 45–65, and 67–87; these read LVLILFIAALLAFAIYDQFIM, IDSVIFVGLIVILIYNNVTNH, and AQITTWLLSALALMGFYIFWI.

It belongs to the UPF0266 family.

The protein localises to the cell inner membrane. The protein is UPF0266 membrane protein YobD of Escherichia fergusonii (strain ATCC 35469 / DSM 13698 / CCUG 18766 / IAM 14443 / JCM 21226 / LMG 7866 / NBRC 102419 / NCTC 12128 / CDC 0568-73).